Here is a 149-residue protein sequence, read N- to C-terminus: HTH-type transcriptional regulator LrpB (149 aa).

In terms of domain architecture, HTH asnC-type spans 3–64 (IDSIDFQILQ…VVDELKMGFS (62 aa)). Positions 22–41 (WKEIGEKIHMTGQAVGNRIK) form a DNA-binding region, H-T-H motif.

Negative regulation of glyA transcription and kinB-dependent sporulation. This is HTH-type transcriptional regulator LrpB (lrpB) from Bacillus subtilis (strain 168).